The sequence spans 351 residues: Photosystem II D2 protein (351 aa).

The chain crosses the membrane as a helical span at residues 39 to 59; sequence TAYLAVGGWMTGTTFVTSWYT. A chlorophyll a-binding site is contributed by His-116. Residues 123-139 form a helical membrane-spanning segment; that stretch reads GFCLRQFEIARLVGIRP. The pheophytin a site is built by Gln-128 and Asn-141. A helical membrane pass occupies residues 151 to 164; sequence VFVSVFLLYPLGQA. His-196 is a binding site for chlorophyll a. Residues 206–226 form a helical membrane-spanning segment; it reads GALLCAIHGATVENTLFEDGD. A plastoquinone-binding residues include His-213 and Phe-260. Fe cation is bound at residue His-213. His-267 contacts Fe cation. Residues 277–293 traverse the membrane as a helical segment; that stretch reads GLWTSAIGIVGLALNLR.

The protein belongs to the reaction center PufL/M/PsbA/D family. As to quaternary structure, PSII is composed of 1 copy each of membrane proteins PsbA, PsbB, PsbC, PsbD, PsbE, PsbF, PsbH, PsbI, PsbJ, PsbK, PsbL, PsbM, PsbT, PsbX, PsbY, PsbZ, Psb30/Ycf12, at least 3 peripheral proteins of the oxygen-evolving complex and a large number of cofactors. It forms dimeric complexes. The D1/D2 heterodimer binds P680, chlorophylls that are the primary electron donor of PSII, and subsequent electron acceptors. It shares a non-heme iron and each subunit binds pheophytin, quinone, additional chlorophylls, carotenoids and lipids. There is also a Cl(-1) ion associated with D1 and D2, which is required for oxygen evolution. The PSII complex binds additional chlorophylls, carotenoids and specific lipids. serves as cofactor.

Its subcellular location is the plastid. It localises to the chloroplast thylakoid membrane. The catalysed reaction is 2 a plastoquinone + 4 hnu + 2 H2O = 2 a plastoquinol + O2. Functionally, photosystem II (PSII) is a light-driven water:plastoquinone oxidoreductase that uses light energy to abstract electrons from H(2)O, generating O(2) and a proton gradient subsequently used for ATP formation. It consists of a core antenna complex that captures photons, and an electron transfer chain that converts photonic excitation into a charge separation. The D1/D2 (PsbA/PsbD) reaction center heterodimer binds P680, the primary electron donor of PSII as well as several subsequent electron acceptors. D2 is needed for assembly of a stable PSII complex. The polypeptide is Photosystem II D2 protein (Phaeodactylum tricornutum (strain CCAP 1055/1)).